The following is a 241-amino-acid chain: ATP synthase subunit a (241 aa).

5 consecutive transmembrane segments (helical) span residues Gly30–Gly50, Phe91–Trp111, Ile128–Ser148, Leu193–Leu213, and Gly214–Gly234.

The protein belongs to the ATPase A chain family. As to quaternary structure, F-type ATPases have 2 components, CF(1) - the catalytic core - and CF(0) - the membrane proton channel. CF(1) has five subunits: alpha(3), beta(3), gamma(1), delta(1), epsilon(1). CF(0) has four main subunits: a, b, b' and c.

Its subcellular location is the cellular thylakoid membrane. Its function is as follows. Key component of the proton channel; it plays a direct role in the translocation of protons across the membrane. This Prochlorococcus marinus (strain MIT 9215) protein is ATP synthase subunit a.